Consider the following 291-residue polypeptide: Pyridoxal 5'-phosphate synthase subunit PdxS (291 aa).

Aspartate 23 serves as a coordination point for D-ribose 5-phosphate. Residue lysine 80 is the Schiff-base intermediate with D-ribose 5-phosphate of the active site. Glycine 152 serves as a coordination point for D-ribose 5-phosphate. A D-glyceraldehyde 3-phosphate-binding site is contributed by arginine 164. Residues glycine 213 and 234-235 each bind D-ribose 5-phosphate; that span reads GS.

Belongs to the PdxS/SNZ family. As to quaternary structure, in the presence of PdxT, forms a dodecamer of heterodimers.

It carries out the reaction aldehydo-D-ribose 5-phosphate + D-glyceraldehyde 3-phosphate + L-glutamine = pyridoxal 5'-phosphate + L-glutamate + phosphate + 3 H2O + H(+). The protein operates within cofactor biosynthesis; pyridoxal 5'-phosphate biosynthesis. In terms of biological role, catalyzes the formation of pyridoxal 5'-phosphate from ribose 5-phosphate (RBP), glyceraldehyde 3-phosphate (G3P) and ammonia. The ammonia is provided by the PdxT subunit. Can also use ribulose 5-phosphate and dihydroxyacetone phosphate as substrates, resulting from enzyme-catalyzed isomerization of RBP and G3P, respectively. The sequence is that of Pyridoxal 5'-phosphate synthase subunit PdxS from Bifidobacterium longum (strain NCC 2705).